A 571-amino-acid chain; its full sequence is Hemagglutinin-neuraminidase (571 aa).

Residues 1–25 (MEDYSNLSLKSIPKRTCRIIFRTAT) lie on the Intravirion side of the membrane. The helical transmembrane segment at 26–46 (ILGICTLIVLCSSILHEIIHL) threads the bilayer. Over 47–571 (DVSSGLMDSD…IIPFLRELIP (525 aa)) the chain is Virion surface. Intrachain disulfides connect C166–C190, C180–C241, and C232–C245. Residues 228–233 (NRKSCS) form an involved in neuraminidase activity region. N-linked (GlcNAc...) asparagine; by host glycosylation is found at N272, N284, and N335. Disulfide bonds link C338-C459, C370-C380, and C453-C463. Residues N386, N454, N498, N501, N517, and N522 are each glycosylated (N-linked (GlcNAc...) asparagine; by host). Residues C535 and C546 are joined by a disulfide bond.

It belongs to the paramyxoviruses hemagglutinin-neuraminidase family. As to quaternary structure, homotetramer; composed of disulfide-linked homodimers. Interacts with F protein trimer.

Its subcellular location is the virion membrane. The protein localises to the host cell membrane. The catalysed reaction is Hydrolysis of alpha-(2-&gt;3)-, alpha-(2-&gt;6)-, alpha-(2-&gt;8)- glycosidic linkages of terminal sialic acid residues in oligosaccharides, glycoproteins, glycolipids, colominic acid and synthetic substrates.. Attaches the virus to sialic acid-containing cell receptors and thereby initiating infection. Binding of HN protein to the receptor induces a conformational change that allows the F protein to trigger virion/cell membranes fusion. Its function is as follows. Neuraminidase activity ensures the efficient spread of the virus by dissociating the mature virions from the neuraminic acid containing glycoproteins. In Homo sapiens (Human), this protein is Hemagglutinin-neuraminidase (HN).